Here is a 231-residue protein sequence, read N- to C-terminus: Large ribosomal subunit protein uL1 (231 aa).

This sequence belongs to the universal ribosomal protein uL1 family. Part of the 50S ribosomal subunit.

Functionally, binds directly to 23S rRNA. The L1 stalk is quite mobile in the ribosome, and is involved in E site tRNA release. Its function is as follows. Protein L1 is also a translational repressor protein, it controls the translation of the L11 operon by binding to its mRNA. The polypeptide is Large ribosomal subunit protein uL1 (Staphylococcus carnosus (strain TM300)).